Consider the following 397-residue polypeptide: Formate-dependent phosphoribosylglycinamide formyltransferase (397 aa).

N(1)-(5-phospho-beta-D-ribosyl)glycinamide-binding positions include 21–22 (EL) and Glu-81. Residues Arg-113, Lys-154, 194-197 (EEYV), and Glu-202 each bind ATP. Residues 118-313 (KLAAEKVKVP…EFQIHVRSAL (196 aa)) form the ATP-grasp domain. Residues Glu-272 and Glu-284 each coordinate Mg(2+). Residues Asp-291, Lys-361, and 368 to 369 (RR) each bind N(1)-(5-phospho-beta-D-ribosyl)glycinamide.

Belongs to the PurK/PurT family. As to quaternary structure, homodimer.

It catalyses the reaction N(1)-(5-phospho-beta-D-ribosyl)glycinamide + formate + ATP = N(2)-formyl-N(1)-(5-phospho-beta-D-ribosyl)glycinamide + ADP + phosphate + H(+). Its pathway is purine metabolism; IMP biosynthesis via de novo pathway; N(2)-formyl-N(1)-(5-phospho-D-ribosyl)glycinamide from N(1)-(5-phospho-D-ribosyl)glycinamide (formate route): step 1/1. Functionally, involved in the de novo purine biosynthesis. Catalyzes the transfer of formate to 5-phospho-ribosyl-glycinamide (GAR), producing 5-phospho-ribosyl-N-formylglycinamide (FGAR). Formate is provided by PurU via hydrolysis of 10-formyl-tetrahydrofolate. The sequence is that of Formate-dependent phosphoribosylglycinamide formyltransferase from Sulfurisphaera tokodaii (strain DSM 16993 / JCM 10545 / NBRC 100140 / 7) (Sulfolobus tokodaii).